The following is a 236-amino-acid chain: Glycoprotein U23 (236 aa).

An N-terminal signal peptide occupies residues 1–17; that stretch reads MLFLSFLLVCLCEEVRM. N-linked (GlcNAc...) asparagine; by host glycosylation is found at Asn-67, Asn-80, and Asn-103. The chain crosses the membrane as a helical span at residues 184 to 204; it reads LVIWIGGISFIGAFVILIVIL.

The protein resides in the membrane. This Human herpesvirus 6A (strain Uganda-1102) (HHV-6 variant A) protein is Glycoprotein U23 (U23).